The primary structure comprises 253 residues: MSTQSRPVVIAGNWKMHMTCAQAKQYAAAFLPQVANAPKDRSIVLAPPFTAISTLQEALAGSDVQIASQNVHWKDSGAFTGEISAEMLLELGVGYTIVGHSEPRKYFSESDEQINQRARASQAAGLIPILCVGESDEQRSSNETERVIRRQVEQGLEGIDPSKLVVAYEPIWAIGTGKTCESEEANRVCGLIRNWVGYPNLTIQYGGSVKPGNIDELMAKSDIDGVLVGGASLEPDSFARIANYQMASAAAAA.

13 to 15 is a binding site for substrate; it reads NWK. Residue His-100 is the Electrophile of the active site. The Proton acceptor role is filled by Glu-169. Substrate is bound by residues Gly-175, Ser-208, and 229–230; that span reads GG.

This sequence belongs to the triosephosphate isomerase family. Homodimer.

It localises to the cytoplasm. It catalyses the reaction D-glyceraldehyde 3-phosphate = dihydroxyacetone phosphate. It functions in the pathway carbohydrate biosynthesis; gluconeogenesis. It participates in carbohydrate degradation; glycolysis; D-glyceraldehyde 3-phosphate from glycerone phosphate: step 1/1. Its function is as follows. Involved in the gluconeogenesis. Catalyzes stereospecifically the conversion of dihydroxyacetone phosphate (DHAP) to D-glyceraldehyde-3-phosphate (G3P). The protein is Triosephosphate isomerase of Synechococcus sp. (strain RCC307).